A 137-amino-acid chain; its full sequence is Transcription antitermination protein NusB (137 aa).

The protein belongs to the NusB family.

Its function is as follows. Involved in transcription antitermination. Required for transcription of ribosomal RNA (rRNA) genes. Binds specifically to the boxA antiterminator sequence of the ribosomal RNA (rrn) operons. The sequence is that of Transcription antitermination protein NusB from Finegoldia magna (strain ATCC 29328 / DSM 20472 / WAL 2508) (Peptostreptococcus magnus).